The chain runs to 146 residues: Oxygen-independent coproporphyrinogen III oxidase (146 aa).

Tyr54 is an S-adenosyl-L-methionine binding site. Residues Cys60 and Cys64 each coordinate [4Fe-4S] cluster. Residue Phe66 coordinates S-adenosyl-L-methionine. Cys67 is a binding site for [4Fe-4S] cluster. S-adenosyl-L-methionine is bound by residues 111 to 112 and Glu143; that span reads GT.

Belongs to the anaerobic coproporphyrinogen-III oxidase family. As to quaternary structure, monomer. The cofactor is [4Fe-4S] cluster.

It is found in the cytoplasm. It carries out the reaction coproporphyrinogen III + 2 S-adenosyl-L-methionine = protoporphyrinogen IX + 2 5'-deoxyadenosine + 2 L-methionine + 2 CO2. The protein operates within porphyrin-containing compound metabolism; protoporphyrin-IX biosynthesis; protoporphyrinogen-IX from coproporphyrinogen-III (AdoMet route): step 1/1. Involved in the heme biosynthesis. Catalyzes the anaerobic oxidative decarboxylation of propionate groups of rings A and B of coproporphyrinogen III to yield the vinyl groups in protoporphyrinogen IX. This is Oxygen-independent coproporphyrinogen III oxidase (hemN) from Mannheimia haemolytica (Pasteurella haemolytica).